Here is a 577-residue protein sequence, read N- to C-terminus: External alternative NAD(P)H-ubiquinone oxidoreductase B1, mitochondrial (577 aa).

The N-terminal 35 residues, 1 to 35 (MRGFTYLSKVLHSHSSYSKLLVLCSVSTGGLLVYA), are a transit peptide targeting the mitochondrion. An FAD-binding site is contributed by 57-87 (RVVVLGTGWGGTSFLKDVDISSYDVQVVSPR). 221-257 (LHFVIVGGGPTGVEFAAELHDYVYEDLVKIYPSVKDF) provides a ligand contact to NAD(+). The EF-hand domain maps to 378–413 (KVMEDISAIFKAADKDDSGTLSIEEFRDVLEDIIIR). 5 residues coordinate Ca(2+): aspartate 391, aspartate 393, serine 395, threonine 397, and glutamate 402. The short motif at 568 to 577 (YIFGRDSSRI) is the Microbody targeting signal element.

It belongs to the NADH dehydrogenase family. Requires FAD as cofactor.

The protein localises to the mitochondrion inner membrane. The protein resides in the peroxisome. The enzyme catalyses a quinone + NADH + H(+) = a quinol + NAD(+). The catalysed reaction is a ubiquinone + NADH + H(+) = a ubiquinol + NAD(+). Its activity is regulated as follows. Activity is calcium-dependent with a more pronounced effect at higher pH. Its function is as follows. Alternative NADH-ubiquinone oxidoreductase which catalyzes the oxidation of mitochondrial NADH does not translocate protons across the inner mitochondrial membrane. Calcium-dependent NAD(P)H dehydrogenase. Binds calcium ions. This chain is External alternative NAD(P)H-ubiquinone oxidoreductase B1, mitochondrial (NDB1), found in Solanum tuberosum (Potato).